We begin with the raw amino-acid sequence, 536 residues long: 2-isopropylmalate synthase (536 aa).

Residues 8–269 (IIIFDTTLRD…YYNPFLGRPV (262 aa)) form the Pyruvate carboxyltransferase domain. Mn(2+) contacts are provided by aspartate 17, histidine 208, histidine 210, and asparagine 244. Residues 408-536 (RLELVQVSCG…KEKAAVTSAS (129 aa)) are regulatory domain.

The protein belongs to the alpha-IPM synthase/homocitrate synthase family. LeuA type 1 subfamily. As to quaternary structure, homodimer. It depends on Mn(2+) as a cofactor.

The protein resides in the cytoplasm. It carries out the reaction 3-methyl-2-oxobutanoate + acetyl-CoA + H2O = (2S)-2-isopropylmalate + CoA + H(+). Its pathway is amino-acid biosynthesis; L-leucine biosynthesis; L-leucine from 3-methyl-2-oxobutanoate: step 1/4. Functionally, catalyzes the condensation of the acetyl group of acetyl-CoA with 3-methyl-2-oxobutanoate (2-ketoisovalerate) to form 3-carboxy-3-hydroxy-4-methylpentanoate (2-isopropylmalate). This is 2-isopropylmalate synthase from Gloeothece citriformis (strain PCC 7424) (Cyanothece sp. (strain PCC 7424)).